The sequence spans 303 residues: Light-independent protochlorophyllide reductase iron-sulfur ATP-binding protein (303 aa).

The disordered stretch occupies residues 1-24 (MSSVLERPAAPAILPSRQDGEGSV). ATP is bound by residues 47 to 52 (GIGKST) and Lys76. Ser51 contributes to the Mg(2+) binding site. The [4Fe-4S] cluster site is built by Cys132 and Cys166. ATP contacts are provided by residues 217-218 (NR) and 241-243 (PDL).

It belongs to the NifH/BchL/ChlL family. Homodimer. Protochlorophyllide reductase is composed of three subunits; BchL, BchN and BchB. The cofactor is [4Fe-4S] cluster.

It catalyses the reaction chlorophyllide a + oxidized 2[4Fe-4S]-[ferredoxin] + 2 ADP + 2 phosphate = protochlorophyllide a + reduced 2[4Fe-4S]-[ferredoxin] + 2 ATP + 2 H2O. Its pathway is porphyrin-containing compound metabolism; bacteriochlorophyll biosynthesis (light-independent). Component of the dark-operative protochlorophyllide reductase (DPOR) that uses Mg-ATP and reduced ferredoxin to reduce ring D of protochlorophyllide (Pchlide) to form chlorophyllide a (Chlide). This reaction is light-independent. The L component serves as a unique electron donor to the NB-component of the complex, and binds Mg-ATP. This Rhodospirillum centenum (strain ATCC 51521 / SW) protein is Light-independent protochlorophyllide reductase iron-sulfur ATP-binding protein.